The sequence spans 263 residues: Transcription factor bHLH27 (263 aa).

Residues 32 to 47 show a composition bias toward low complexity; sequence EAFSGSGESSSPDGAA. The disordered stretch occupies residues 32 to 61; the sequence is EAFSGSGESSSPDGAATSPASSKNVVSERN. A compositionally biased stretch (polar residues) spans 49–58; that stretch reads SPASSKNVVS. Positions 50–99 constitute a bHLH domain; that stretch reads PASSKNVVSERNRRQKLNQRLFALRSVVPNISKLDKASVIKDSIDYMQEL.

As to quaternary structure, homodimer. As to expression, expressed constitutively in roots, leaves, stems, and flowers.

Its subcellular location is the nucleus. The polypeptide is Transcription factor bHLH27 (BHLH27) (Arabidopsis thaliana (Mouse-ear cress)).